A 348-amino-acid polypeptide reads, in one-letter code: Putative agmatine deiminase (348 aa).

Cysteine 335 acts as the Amidino-cysteine intermediate in catalysis.

It belongs to the agmatine deiminase family.

It carries out the reaction agmatine + H2O = N-carbamoylputrescine + NH4(+). The chain is Putative agmatine deiminase from Legionella pneumophila subsp. pneumophila (strain Philadelphia 1 / ATCC 33152 / DSM 7513).